We begin with the raw amino-acid sequence, 1538 residues long: Lhr helicase/uracil glycosylase (1538 aa).

A lhr-Core region spans residues 1–897; the sequence is MADNPDPSSL…ERRASVLSLD (897 aa). ATP-binding residues include Gln-34, Lys-57, Thr-58, Asp-179, Glu-180, Ile-398, Arg-415, and His-418. A Helicase ATP-binding domain is found at 38-235; that stretch reads WHVAARSEHA…FLGGDRPVTV (198 aa). The DEVH box motif lies at 179–182; that stretch reads DEVH. The 179-residue stretch at 284 to 462 folds into the Helicase C-terminal domain; that stretch reads GILDEVLRHR…NLTPPHNPLD (179 aa). Residues 463-552 form a beta-sheet bundle region; that stretch reads VLAQQTVAAA…VTSGGTIPDR (90 aa). The segment at 553–623 is WH domain; that stretch reads GMYSVLLPEG…SARLPFWRGE (71 aa). The segment at 624–897 is domain 4; that stretch reads GNGRPAELGE…ERRASVLSLD (274 aa). The segment at 898–1538 is lhr-CTD; the sequence is SELLRNLLGQ…SSSPQGLDWG (641 aa). The tract at residues 1287–1312 is disordered; it reads SNARTSTRRSHRARRGRPVYAQPVSP. Basic residues predominate over residues 1292-1303; the sequence is STRRSHRARRGR.

This sequence belongs to the Lhr helicase family. In terms of assembly, homooligomerizes, probably a homotetramer. Ca(2+) is required as a cofactor. Uracil deglycosylase activity does not require a cofactor. serves as cofactor.

The enzyme catalyses Couples ATP hydrolysis with the unwinding of duplex DNA by translocating in the 3'-5' direction.. It carries out the reaction ATP + H2O = ADP + phosphate + H(+). The catalysed reaction is Hydrolyzes single-stranded DNA or mismatched double-stranded DNA and polynucleotides, releasing free uracil.. In terms of biological role, a 3'-5' helicase probably involved in DNA repair. Translocates in an ATP-dependent manner 3'-to-5' on single-stranded (ss)DNA, unwinding any encountered duplex nucleic acid. An RNA:DNA hybrid with a 3'-ssDNA loading strand is a 4.5-fold better helicase substrate than 3'-tailed double-stranded (ds)DNA; substrates where the helicase loads on a 3'-ssRNA tail (DNA:RNA and RNA:RNA) are not unwound. Unlike its M.smegmatis counterpart, the ATPase is not ssDNA-dependent. Forms a clamp around the ssDNA loading strand. Its function is as follows. Excises uracil residues from DNA; forked DNA with a dU residue is the best substrate followed by ssDNA. Inactive on dsDNA with a dU residue or DNA with an 8-oxoguanine residue. Uracil residues in DNA can arise as a result of misincorporation of dUMP residues by DNA polymerase or due to deamination of cytosine. This Escherichia coli (strain K12) protein is Lhr helicase/uracil glycosylase.